A 1038-amino-acid chain; its full sequence is Inner tegument protein (1038 aa).

The interaction with large tegument protein stretch occupies residues 545–1038; sequence WGITPPVDVG…VPGNTSGSDP (494 aa).

This sequence belongs to the herpesviridae inner tegument protein family. As to quaternary structure, interacts (via C-terminus) with the large tegument protein/LTP (via N-terminus).

It localises to the virion tegument. The protein resides in the host cytoplasm. It is found in the host nucleus. The protein localises to the host Golgi apparatus. Its subcellular location is the host trans-Golgi network. Plays an essential role in cytoplasmic secondary envelopment during viral egress. Interacts with the capsid via the large tegument protein/LTP and participates in its transport to the host trans-Golgi network (TGN) where secondary envelopment occurs. Modulates tegumentation and capsid accumulation at the viral assembly complex. The sequence is that of Inner tegument protein (21) from Homo sapiens (Human).